Reading from the N-terminus, the 230-residue chain is Chalcone--flavanone isomerase (230 aa).

Substrate contacts are provided by Thr-52, Asn-117, and Ser-194.

It belongs to the chalcone isomerase family.

It carries out the reaction a chalcone = a flavanone.. Its pathway is secondary metabolite biosynthesis; flavonoid biosynthesis. Its function is as follows. Catalyzes the intramolecular cyclization of bicyclic chalcones into tricyclic (S)-flavanones. Responsible for the isomerization of 4,2',4',6'-tetrahydroxychalcone (also termed chalcone) into naringenin. This chain is Chalcone--flavanone isomerase (CHI), found in Camellia sinensis (Tea plant).